Here is an 86-residue protein sequence, read N- to C-terminus: Large ribosomal subunit protein eL43 (86 aa).

The C4-type zinc-finger motif lies at 38-59 (CPVCGRKAVRRISTGIWQCQKC).

This sequence belongs to the eukaryotic ribosomal protein eL43 family. Requires Zn(2+) as cofactor.

The polypeptide is Large ribosomal subunit protein eL43 (Thermococcus gammatolerans (strain DSM 15229 / JCM 11827 / EJ3)).